A 267-amino-acid chain; its full sequence is 14-3-3-like protein GF14 phi (267 aa).

Ala2 carries the post-translational modification N-acetylalanine. 2 positions are modified to phosphoserine: Ser73 and Ser196. Thr217 carries the post-translational modification Phosphothreonine. The segment at 244 to 267 (MQDESPEEIKEAAAPKPAEEQKEI) is disordered. Phosphoserine is present on Ser248. Basic and acidic residues predominate over residues 250–267 (EEIKEAAAPKPAEEQKEI).

It belongs to the 14-3-3 family. Interacts with FD. Interacts with CINV1.

The protein localises to the nucleus. It localises to the cytoplasm. Is associated with a DNA binding complex that binds to the G box, a well-characterized cis-acting DNA regulatory element found in plant genes. The protein is 14-3-3-like protein GF14 phi (GRF4) of Arabidopsis thaliana (Mouse-ear cress).